Reading from the N-terminus, the 1025-residue chain is Multidrug resistance protein MdtC (1025 aa).

A run of 12 helical transmembrane segments spans residues 3-23, 333-353, 360-380, 387-407, 431-451, 463-483, 528-548, 853-873, 875-895, 897-917, 953-973, and 984-1004; these read FFALFIYRPVATILLSVAITL, EVEQTLIISVALVILVVFLFL, IIPAVAVPVSLIGTFAAMYLC, LSLMALTIATGFVVDDAIVVL, VGFTVLSMSLSLVAVFLPLLL, FAVTLSVAIGISLLVSLTLTP, LVGVVLLGTIALNIWLYISIP, VILIIAAIATVYIVLGILYES, VHPLTILSTLPSAGVGALLAL, LFNAPFSLIALIGIMLLIGIV, PIMMTTLAALFGALPLVLSGG, and ITIVGGLVMSQLLTLYTTPVV.

Belongs to the resistance-nodulation-cell division (RND) (TC 2.A.6) family. MdtC subfamily. Part of a tripartite efflux system composed of MdtA, MdtB and MdtC. MdtC forms a heteromultimer with MdtB.

Its subcellular location is the cell inner membrane. In terms of biological role, the MdtABC tripartite complex confers resistance against novobiocin and deoxycholate. In Escherichia coli (strain UTI89 / UPEC), this protein is Multidrug resistance protein MdtC.